Consider the following 1202-residue polypeptide: DNA-directed RNA polymerase subunit beta (1202 aa).

The interval 1154–1202 is disordered; that stretch reads NMDEDDDEVVNVDALAKYAEEHKADDKKNEEENKSEATSTTTDDKTNQN. Residues 1171–1188 show a composition bias toward basic and acidic residues; that stretch reads YAEEHKADDKKNEEENKS.

It belongs to the RNA polymerase beta chain family. In terms of assembly, the RNAP catalytic core consists of 2 alpha, 1 beta, 1 beta' and 1 omega subunit. When a sigma factor is associated with the core the holoenzyme is formed, which can initiate transcription.

It catalyses the reaction RNA(n) + a ribonucleoside 5'-triphosphate = RNA(n+1) + diphosphate. In terms of biological role, DNA-dependent RNA polymerase catalyzes the transcription of DNA into RNA using the four ribonucleoside triphosphates as substrates. The sequence is that of DNA-directed RNA polymerase subunit beta from Limosilactobacillus reuteri (strain DSM 20016) (Lactobacillus reuteri).